We begin with the raw amino-acid sequence, 129 residues long: NADH-quinone oxidoreductase subunit A (129 aa).

3 helical membrane passes run 14–34, 67–87, and 95–115; these read LAIHVALSAGIVAAIIVVAAW, FLIAALFVIFDMEAAILFAWA, and WLGLIEAAVFIGVLLLALVYL.

Belongs to the complex I subunit 3 family. As to quaternary structure, NDH-1 is composed of 14 different subunits. Subunits NuoA, H, J, K, L, M, N constitute the membrane sector of the complex.

Its subcellular location is the cell inner membrane. The catalysed reaction is a quinone + NADH + 5 H(+)(in) = a quinol + NAD(+) + 4 H(+)(out). Functionally, NDH-1 shuttles electrons from NADH, via FMN and iron-sulfur (Fe-S) centers, to quinones in the respiratory chain. The immediate electron acceptor for the enzyme in this species is believed to be ubiquinone. Couples the redox reaction to proton translocation (for every two electrons transferred, four hydrogen ions are translocated across the cytoplasmic membrane), and thus conserves the redox energy in a proton gradient. This Rhodopseudomonas palustris (strain ATCC BAA-98 / CGA009) protein is NADH-quinone oxidoreductase subunit A.